A 273-amino-acid chain; its full sequence is Dermonecrotic toxin LsaSicTox-alphaIB1aii (273 aa).

Residue His-5 is part of the active site. 2 residues coordinate Mg(2+): Glu-25 and Asp-27. His-41 (nucleophile) is an active-site residue. Cystine bridges form between Cys-45-Cys-51 and Cys-47-Cys-190. Asp-85 provides a ligand contact to Mg(2+).

The protein belongs to the arthropod phospholipase D family. Class II subfamily. The cofactor is Mg(2+). Expressed by the venom gland.

It localises to the secreted. The catalysed reaction is an N-(acyl)-sphingosylphosphocholine = an N-(acyl)-sphingosyl-1,3-cyclic phosphate + choline. It carries out the reaction an N-(acyl)-sphingosylphosphoethanolamine = an N-(acyl)-sphingosyl-1,3-cyclic phosphate + ethanolamine. The enzyme catalyses a 1-acyl-sn-glycero-3-phosphocholine = a 1-acyl-sn-glycero-2,3-cyclic phosphate + choline. It catalyses the reaction a 1-acyl-sn-glycero-3-phosphoethanolamine = a 1-acyl-sn-glycero-2,3-cyclic phosphate + ethanolamine. Its function is as follows. Dermonecrotic toxins cleave the phosphodiester linkage between the phosphate and headgroup of certain phospholipids (sphingolipid and lysolipid substrates), forming an alcohol (often choline) and a cyclic phosphate. This toxin acts on sphingomyelin (SM). It may also act on ceramide phosphoethanolamine (CPE), lysophosphatidylcholine (LPC) and lysophosphatidylethanolamine (LPE), but not on lysophosphatidylserine (LPS), and lysophosphatidylglycerol (LPG). It acts by transphosphatidylation, releasing exclusively cyclic phosphate products as second products. Induces dermonecrosis, hemolysis, increased vascular permeability, edema, inflammatory response, and platelet aggregation. This is Dermonecrotic toxin LsaSicTox-alphaIB1aii from Loxosceles sabina (Tucson recluse spider).